The following is a 188-amino-acid chain: dCTP deaminase (188 aa).

Residues 111–116 (KSTYAR), 135–137 (TLE), glutamine 156, tyrosine 170, and glutamine 180 contribute to the dCTP site. The Proton donor/acceptor role is filled by glutamate 137.

It belongs to the dCTP deaminase family. In terms of assembly, homotrimer.

It catalyses the reaction dCTP + H2O + H(+) = dUTP + NH4(+). It participates in pyrimidine metabolism; dUMP biosynthesis; dUMP from dCTP (dUTP route): step 1/2. Its function is as follows. Catalyzes the deamination of dCTP to dUTP. In Herminiimonas arsenicoxydans, this protein is dCTP deaminase.